A 335-amino-acid polypeptide reads, in one-letter code: MGRGKKMSKPGDGRSGDVSDTGRNGGTNENHPKTNGEVVHCGQAKIYSYMSPTKSPSARPPLQEENSVTHHESKCLGKPSTETRKKAEVEKKKILSTELSVKPSEQRETECNSIGEFLEPKLELNDVQRNLALPPEDKLQSQKMVKNKPLRKKTQRQKSPNRKLTDYYPVRRSSRKNKTEIESEEKKRIDELIQTGKEEGIKMHMITGKGRGVIATRDFQRGEFVVEYHGDLIEITDAKRREASYAQDSATGCYMYYFQYLNTSYCIDATRETGRLGRLINHSKSGNCHTKLHNINNVPHLILVASRDINVGEELLYDYGDRRKSSIDAHPWLKN.

Disordered regions lie at residues 1-91 and 133-183; these read MGRG…EVEK and LPPE…EIES. The segment covering 67 to 91 has biased composition (basic and acidic residues); sequence SVTHHESKCLGKPSTETRKKAEVEK. Residues 145 to 161 are compositionally biased toward basic residues; it reads VKNKPLRKKTQRQKSPN. An SET domain is found at 199–320; the sequence is EGIKMHMITG…VGEELLYDYG (122 aa). S-adenosyl-L-methionine is bound by residues 209–211, tyrosine 254, and 281–282; these read KGR and NH.

The protein belongs to the class V-like SAM-binding methyltransferase superfamily. Histone-lysine methyltransferase family. PR/SET subfamily.

It localises to the nucleus. The protein localises to the chromosome. It carries out the reaction L-lysyl(20)-[histone H4] + S-adenosyl-L-methionine = N(6)-methyl-L-lysyl(20)-[histone H4] + S-adenosyl-L-homocysteine + H(+). It catalyses the reaction L-lysyl-[protein] + S-adenosyl-L-methionine = N(6)-methyl-L-lysyl-[protein] + S-adenosyl-L-homocysteine + H(+). In terms of biological role, protein-lysine N-methyltransferase that monomethylates both histones and non-histone proteins. Specifically monomethylates 'Lys-20' of histone H4 (H4K20me1). H4K20me1 is enriched during mitosis and represents a specific tag for epigenetic transcriptional repression. Mainly functions in euchromatin regions, thereby playing a central role in the silencing of euchromatic genes. Required for cell proliferation, probably by contributing to the maintenance of proper higher-order structure of DNA during mitosis. Involved in chromosome condensation and proper cytokinesis. This chain is N-lysine methyltransferase KMT5A-A, found in Xenopus laevis (African clawed frog).